Here is a 103-residue protein sequence, read N- to C-terminus: Integration host factor subunit beta (103 aa).

Positions 62 to 81 (RNPKTGESVALPGKHVPHFK) are disordered.

The protein belongs to the bacterial histone-like protein family. In terms of assembly, heterodimer of an alpha and a beta chain.

In terms of biological role, this protein is one of the two subunits of integration host factor, a specific DNA-binding protein that functions in genetic recombination as well as in transcriptional and translational control. The protein is Integration host factor subunit beta of Xanthomonas campestris pv. campestris (strain B100).